A 589-amino-acid polypeptide reads, in one-letter code: ATP-dependent lipid A-core flippase (589 aa).

The next 6 helical transmembrane spans lie at 33–53 (VLAIVCMVLAAAGQAAFAWII), 70–90 (LWVPATLVGIFLFHGVTTFAS), 148–168 (VVVLVRDTFTVIFLLAYMTYL), 170–190 (GWLVMIVFGLGPLVAVVVTAA), 262–282 (LGAVIALAIILYLATMDVILE), and 283–303 (TISPGGMISFIAAMLLMLPPL). The region spanning 33 to 315 (VLAIVCMVLA…VIGVNAEIQK (283 aa)) is the ABC transmembrane type-1 domain. An ABC transporter domain is found at 347-583 (IEFDRVAFRY…NGHYASLHRV (237 aa)). Position 381 to 388 (381 to 388 (GRSGSGKT)) interacts with ATP.

Belongs to the ABC transporter superfamily. Lipid exporter (TC 3.A.1.106) family. Homodimer.

The protein resides in the cell inner membrane. The catalysed reaction is ATP + H2O + lipid A-core oligosaccharideSide 1 = ADP + phosphate + lipid A-core oligosaccharideSide 2.. Functionally, involved in lipopolysaccharide (LPS) biosynthesis. Translocates lipid A-core from the inner to the outer leaflet of the inner membrane. Transmembrane domains (TMD) form a pore in the inner membrane and the ATP-binding domain (NBD) is responsible for energy generation. This is ATP-dependent lipid A-core flippase from Alkalilimnicola ehrlichii (strain ATCC BAA-1101 / DSM 17681 / MLHE-1).